Reading from the N-terminus, the 302-residue chain is N-acetylmuramic acid 6-phosphate etherase (302 aa).

One can recognise an SIS domain in the interval 58–221; it reads IGKAFLNGGR…STGAMVKTGK (164 aa). Glutamate 86 functions as the Proton donor in the catalytic mechanism. The active site involves glutamate 117.

Belongs to the GCKR-like family. MurNAc-6-P etherase subfamily. In terms of assembly, homodimer.

It carries out the reaction N-acetyl-D-muramate 6-phosphate + H2O = N-acetyl-D-glucosamine 6-phosphate + (R)-lactate. It functions in the pathway amino-sugar metabolism; N-acetylmuramate degradation. Its function is as follows. Specifically catalyzes the cleavage of the D-lactyl ether substituent of MurNAc 6-phosphate, producing GlcNAc 6-phosphate and D-lactate. This is N-acetylmuramic acid 6-phosphate etherase from Clostridium botulinum (strain Loch Maree / Type A3).